Here is a 471-residue protein sequence, read N- to C-terminus: Probable ribonuclease FAU-1 (471 aa).

Positions 93-139 constitute an S1 motif domain; sequence GAVFDAAVDHTVGGGAILDLGDDREAYLPFGAVDDHVTDGDTLRVAI.

Belongs to the FAU-1 family.

Its function is as follows. Probable RNase involved in rRNA stability through maturation and/or degradation of precursor rRNAs. Binds to RNA in loop regions with AU-rich sequences. This chain is Probable ribonuclease FAU-1, found in Halobacterium salinarum (strain ATCC 29341 / DSM 671 / R1).